The following is a 566-amino-acid chain: Putative pentatricopeptide repeat-containing protein At1g28020 (566 aa).

PPR repeat units lie at residues 136–171 (GDSV…GLLL), 172–206 (RPVP…DVEA), 207–242 (DNVT…GIKL), 243–273 (EWHT…TEQL), 279–309 (LKSA…YKSK), 314–348 (DNNG…PLEF), 349–385 (DHRI…RMNK), 468–504 (DYSV…NVDP), and 505–540 (DLIT…GIKL).

The protein belongs to the PPR family. P subfamily.

The sequence is that of Putative pentatricopeptide repeat-containing protein At1g28020 from Arabidopsis thaliana (Mouse-ear cress).